The sequence spans 384 residues: 5-cytosine rRNA methyltransferase NSUN4 (384 aa).

Residues 1–25 constitute a mitochondrion transit peptide; sequence MAALVVRGVRDMLKRADFATVPRRQ. 4 residues coordinate S-adenosyl-L-methionine: glycine 185, glycine 186, lysine 187, and aspartate 204. Residue serine 206 is modified to Phosphoserine. 4 residues coordinate S-adenosyl-L-methionine: arginine 209, aspartate 237, glycine 238, and aspartate 255. Cysteine 310 serves as the catalytic Nucleophile.

Belongs to the class I-like SAM-binding methyltransferase superfamily. RsmB/NOP family. As to quaternary structure, heterodimer with MTERFD2/MTERF4; this interaction seems to be required for NSUN4 recruitment to the mitochondrial large ribosomal subunit.

It is found in the mitochondrion. The catalysed reaction is a cytidine in rRNA + S-adenosyl-L-methionine = a 5-methylcytidine in rRNA + S-adenosyl-L-homocysteine + H(+). It carries out the reaction a cytidine in mRNA + S-adenosyl-L-methionine = a 5-methylcytidine in mRNA + S-adenosyl-L-homocysteine + H(+). Its function is as follows. Mitochondrial RNA cytosine C(5)-methyltransferase that methylates cytosine to 5-methylcytosine (m5C) in various RNAs, such as rRNAs, mRNAs and some long non-coding RNAs (lncRNAs). Involved in mitochondrial ribosome small subunit (SSU) maturation by catalyzing methylation of mitochondrial 12S rRNA; the function is independent of MTERFD2/MTERF4 and assembled mitochondrial ribosome large subunit (LSU). Targeted to LSU by MTERFD2/MTERF4 and probably is involved in a final step in ribosome biogenesis to ensure that SSU and LSU are assembled. In vitro can methylate 16S rRNA of the LSU; the methylation is enhanced by MTERFD/MTERF4. Also acts as a regulator of innate immunity by marking double-stranded mitochondrial RNAs(mt-dsRNAs) generated in response to stress: catalyzes m5C modification on mitochondrial RNAs, such as a mRNAs and lncRNAs, with a preference for the termini of light-strand lncRNAs, promoting their degradation and cytosolic release. Modified light-strand lncRNAs are then recognized by C1QBP reader and recruited to the mitochondrial degradosome complex, which promotes their degradation. The chain is 5-cytosine rRNA methyltransferase NSUN4 (NSUN4) from Bos taurus (Bovine).